The following is a 398-amino-acid chain: Acetate kinase (398 aa).

N9 is a binding site for Mg(2+). K16 is an ATP binding site. R93 is a substrate binding site. The active-site Proton donor/acceptor is the D150. ATP contacts are provided by residues 209 to 213, 284 to 286, and 329 to 333; these read HLGAG, DMR, and GIGEH. E382 contacts Mg(2+).

The protein belongs to the acetokinase family. Homodimer. The cofactor is Mg(2+). Mn(2+) is required as a cofactor.

The protein resides in the cytoplasm. It catalyses the reaction acetate + ATP = acetyl phosphate + ADP. The protein operates within metabolic intermediate biosynthesis; acetyl-CoA biosynthesis; acetyl-CoA from acetate: step 1/2. In terms of biological role, catalyzes the formation of acetyl phosphate from acetate and ATP. Can also catalyze the reverse reaction. The chain is Acetate kinase from Rhodopseudomonas palustris (strain ATCC BAA-98 / CGA009).